The sequence spans 236 residues: Uridylate kinase (236 aa).

An ATP-binding site is contributed by 9 to 12; sequence KFSG. The involved in allosteric activation by GTP stretch occupies residues 17 to 22; it reads GNSGFG. G51 contacts UMP. ATP contacts are provided by G52 and R56. Residues D72 and 133-140 each bind UMP; that span reads TGNPFFTT. T160, Y166, and D169 together coordinate ATP.

Belongs to the UMP kinase family. As to quaternary structure, homohexamer.

It is found in the cytoplasm. It carries out the reaction UMP + ATP = UDP + ADP. Its pathway is pyrimidine metabolism; CTP biosynthesis via de novo pathway; UDP from UMP (UMPK route): step 1/1. Its activity is regulated as follows. Allosterically activated by GTP. Inhibited by UTP. Its function is as follows. Catalyzes the reversible phosphorylation of UMP to UDP. This Helicobacter hepaticus (strain ATCC 51449 / 3B1) protein is Uridylate kinase.